A 128-amino-acid chain; its full sequence is NADH dehydrogenase [ubiquinone] 1 beta subcomplex subunit 6 (128 aa).

Serine 2 is modified (N-acetylserine). Residue lysine 24 is modified to N6-acetyllysine. The helical transmembrane segment at 64 to 86 (AYRSSLFAVSHVLIPMWFVHYYV) threads the bilayer.

This sequence belongs to the complex I NDUFB6 subunit family. In terms of assembly, complex I is composed of 45 different subunits.

Its subcellular location is the mitochondrion inner membrane. Its function is as follows. Accessory subunit of the mitochondrial membrane respiratory chain NADH dehydrogenase (Complex I), that is believed not to be involved in catalysis. Complex I functions in the transfer of electrons from NADH to the respiratory chain. The immediate electron acceptor for the enzyme is believed to be ubiquinone. The polypeptide is NADH dehydrogenase [ubiquinone] 1 beta subcomplex subunit 6 (Ndufb6) (Mus musculus (Mouse)).